The chain runs to 213 residues: Probable transaldolase (213 aa).

Lys83 serves as the catalytic Schiff-base intermediate with substrate.

It belongs to the transaldolase family. Type 3B subfamily.

It is found in the cytoplasm. It catalyses the reaction D-sedoheptulose 7-phosphate + D-glyceraldehyde 3-phosphate = D-erythrose 4-phosphate + beta-D-fructose 6-phosphate. It functions in the pathway carbohydrate degradation; pentose phosphate pathway; D-glyceraldehyde 3-phosphate and beta-D-fructose 6-phosphate from D-ribose 5-phosphate and D-xylulose 5-phosphate (non-oxidative stage): step 2/3. In terms of biological role, transaldolase is important for the balance of metabolites in the pentose-phosphate pathway. This is Probable transaldolase from Desulfitobacterium hafniense (strain DSM 10664 / DCB-2).